A 263-amino-acid polypeptide reads, in one-letter code: 5'-nucleotidase SurE (263 aa).

The a divalent metal cation site is built by aspartate 8, aspartate 9, serine 40, and asparagine 93.

It belongs to the SurE nucleotidase family. A divalent metal cation serves as cofactor.

It localises to the cytoplasm. It catalyses the reaction a ribonucleoside 5'-phosphate + H2O = a ribonucleoside + phosphate. In terms of biological role, nucleotidase that shows phosphatase activity on nucleoside 5'-monophosphates. In Beijerinckia indica subsp. indica (strain ATCC 9039 / DSM 1715 / NCIMB 8712), this protein is 5'-nucleotidase SurE.